Reading from the N-terminus, the 61-residue chain is Photosystem II reaction center protein K (61 aa).

A propeptide spanning residues 1–24 is cleaved from the precursor; sequence MINIVSLVCIYINSVPYSSIFFLD. Residues 36 to 56 form a helical membrane-spanning segment; it reads IVDIMPVIPLFFFLLAFVWQA.

This sequence belongs to the PsbK family. PSII is composed of 1 copy each of membrane proteins PsbA, PsbB, PsbC, PsbD, PsbE, PsbF, PsbH, PsbI, PsbJ, PsbK, PsbL, PsbM, PsbT, PsbX, PsbY, PsbZ, Psb30/Ycf12, at least 3 peripheral proteins of the oxygen-evolving complex and a large number of cofactors. It forms dimeric complexes.

The protein resides in the plastid. The protein localises to the chloroplast thylakoid membrane. Its function is as follows. One of the components of the core complex of photosystem II (PSII). PSII is a light-driven water:plastoquinone oxidoreductase that uses light energy to abstract electrons from H(2)O, generating O(2) and a proton gradient subsequently used for ATP formation. It consists of a core antenna complex that captures photons, and an electron transfer chain that converts photonic excitation into a charge separation. The polypeptide is Photosystem II reaction center protein K (Lotus japonicus (Lotus corniculatus var. japonicus)).